A 321-amino-acid chain; its full sequence is Lipoyl synthase (321 aa).

The [4Fe-4S] cluster site is built by C68, C73, C79, C94, C98, C101, and S308. In terms of domain architecture, Radical SAM core spans 80–297 (FNHGTATFMI…KALADELGFT (218 aa)).

This sequence belongs to the radical SAM superfamily. Lipoyl synthase family. Requires [4Fe-4S] cluster as cofactor.

The protein resides in the cytoplasm. It carries out the reaction [[Fe-S] cluster scaffold protein carrying a second [4Fe-4S](2+) cluster] + N(6)-octanoyl-L-lysyl-[protein] + 2 oxidized [2Fe-2S]-[ferredoxin] + 2 S-adenosyl-L-methionine + 4 H(+) = [[Fe-S] cluster scaffold protein] + N(6)-[(R)-dihydrolipoyl]-L-lysyl-[protein] + 4 Fe(3+) + 2 hydrogen sulfide + 2 5'-deoxyadenosine + 2 L-methionine + 2 reduced [2Fe-2S]-[ferredoxin]. It participates in protein modification; protein lipoylation via endogenous pathway; protein N(6)-(lipoyl)lysine from octanoyl-[acyl-carrier-protein]: step 2/2. Its function is as follows. Catalyzes the radical-mediated insertion of two sulfur atoms into the C-6 and C-8 positions of the octanoyl moiety bound to the lipoyl domains of lipoate-dependent enzymes, thereby converting the octanoylated domains into lipoylated derivatives. The polypeptide is Lipoyl synthase (Shewanella baltica (strain OS185)).